The primary structure comprises 144 residues: Maximins 3/H14 (144 aa).

The first 18 residues, Met1–Ala18, serve as a signal peptide directing secretion. 2 propeptides span residues Arg19–Arg43 and Arg73–Lys122. Ile143 bears the Isoleucine amide mark.

It belongs to the bombinin family. In terms of tissue distribution, expressed by the skin glands.

The protein resides in the secreted. Its function is as follows. Maximin-3 shows antibacterial activity against both Gram-positive and Gram-negative bacteria. It also shows antimicrobial activity against the fungus C.albicans, but not against A.flavus nor P.uticale. It has little hemolytic activity. It possess a significant cytotoxicity against tumor cell lines. It possess a significant anti-HIV activity. It shows high spermicidal activity. Maximin-H14 shows antimicrobial activity against bacteria and against the fungus C.albicans. Shows strong hemolytic activity. This Bombina maxima (Giant fire-bellied toad) protein is Maximins 3/H14.